The following is a 373-amino-acid chain: MGYILTGYSSRHDKRKKHALPLHRYASSSINLQHHVHLLETRVSSKRPISEDQRTIRLPAKKLRHHQKLTLQDLPVEIIQHIFVFTKGEPSMVTLNRFFYSCLKPSFSLLSKIMWEKYLFDPLEFGVSNIKAYSRNIVIPTLFEHETFFRLLLDHHPILLKNISHFLPRKHYQDMQNGDFDTSKELDLCSMNTEDTSKEDFPKNFYNNMHIFLTRRECVKSLGNHFTLKNPYDVISPFIEWFFQGIDMQGTDLSPKFTFVSLFESIDLILYVSGSTVQKLASIEPLTTVIFLLYFTYADSLGSLNFEFFLQNRSRLQLIEKFILKYYYNPSLTENELLSDSTIWDLLRRVSDLKLIDLVVKCGGRPQYGVMFA.

This is an uncharacterized protein from Saccharomyces cerevisiae (strain ATCC 204508 / S288c) (Baker's yeast).